Reading from the N-terminus, the 249-residue chain is Small ribosomal subunit protein uS2 (249 aa).

This sequence belongs to the universal ribosomal protein uS2 family.

This is Small ribosomal subunit protein uS2 from Polynucleobacter asymbioticus (strain DSM 18221 / CIP 109841 / QLW-P1DMWA-1) (Polynucleobacter necessarius subsp. asymbioticus).